The following is a 255-amino-acid chain: Fe(3+) dicitrate transport ATP-binding protein FecE (255 aa).

Residues 3–238 (LRTENLTVSY…GLLRTVFSVE (236 aa)) enclose the ABC transporter domain. 35-42 (GPNGCGKS) serves as a coordination point for ATP.

This sequence belongs to the ABC transporter superfamily. The complex is composed of two ATP-binding proteins (FecE), two transmembrane proteins (FecC and FecD) and a solute-binding protein (FecB).

The protein resides in the cell inner membrane. It catalyses the reaction iron(III) dicitrate(out) + ATP + H2O = iron(III) dicitrate(in) + ADP + phosphate + H(+). Part of the ABC transporter complex FecBCDE involved in citrate-dependent Fe(3+) uptake. Binds ATP. Probably responsible for energy coupling to the transport system. This Escherichia coli (strain K12) protein is Fe(3+) dicitrate transport ATP-binding protein FecE.